Here is a 367-residue protein sequence, read N- to C-terminus: CCN family member 4 (367 aa).

An N-terminal signal peptide occupies residues 1–22; that stretch reads MRWLLPWTLAAVAVLRVGNILA. Residues 45 to 118 form the IGFBP N-terminal domain; that stretch reads RPEFCKWPCE…RYAIGVCAQV (74 aa). Cystine bridges form between Cys49-Cys73, Cys53-Cys75, Cys55-Cys76, and Cys62-Cys79. Asn86 carries an N-linked (GlcNAc...) asparagine glycan. 2 disulfides stabilise this stretch: Cys87-Cys101 and Cys93-Cys115. In terms of domain architecture, VWFC spans 121 to 186; sequence VGCVLDGVRY…GQCCEQWVCD (66 aa). N-linked (GlcNAc...) asparagine glycosylation occurs at Asn143. Positions 215-260 constitute a TSP type-1 domain; the sequence is NCIAYTSPWSPCSTTCGLGISTRISNVNARCWPEQESRLCNLRPCD. 5 cysteine pairs are disulfide-bonded: Cys273–Cys310, Cys290–Cys324, Cys301–Cys340, Cys304–Cys342, and Cys309–Cys346. A CTCK domain is found at 273–347; sequence CLAVYQPEEA…NACFCNLSCR (75 aa). An N-linked (GlcNAc...) asparagine glycan is attached at Asn284. N-linked (GlcNAc...) asparagine glycosylation is present at Asn343.

It belongs to the CCN family. Highly expressed in kidney and lung. Lower levels in heart, brain, spleen, liver, skeletal muscle and testis. Expressed in low metastatic melanoma cells.

It localises to the secreted. In terms of biological role, downstream regulator in the Wnt/Frizzled-signaling pathway. Associated with cell survival. Adheres to skin and melanoma fibroblasts. In vitro binding to skin fibroblasts occurs through the proteoglycans, decorin and biglycan. Suppresses tumor growth in vivo. This Mus musculus (Mouse) protein is CCN family member 4 (Ccn4).